A 2512-amino-acid chain; its full sequence is Isonitrile lipopeptide synthase (2512 aa).

Carrier domains follow at residues 935–1003 (AAGL…PTPD) and 1984–2059 (APAG…GRDA). An O-(pantetheine 4'-phosphoryl)serine mark is found at S963 and S2019. Residues 2112-2372 (LTGATGFLGR…LPVTFVAEAI (261 aa)) form the Thioester reductase (TE) domain.

The protein belongs to the ATP-dependent AMP-binding enzyme family. Pantetheine 4'-phosphate serves as cofactor.

The catalysed reaction is 2 a (3R)-3-isocyanyl-fatty acyl-[ACP] + L-lysine + ATP + 2 NADPH = an isonitrile lipopeptide + 2 holo-[ACP] + AMP + diphosphate + 2 NADP(+). Nonribosomal peptide synthetase (NRPS) involved in the biosynthesis of a unique class of isonitrile lipopeptides (INLPs) that seem to function as virulence factors in M.tuberculosis and to play a role in metal acquisition. Catalyzes the final step in the pathway, i.e. the condensation of a (3R)-3-isocyanyl-fatty acyl-[ACP] to both amino groups of a lysine, producing isonitrile lipopeptides. The sequence is that of Isonitrile lipopeptide synthase from Mycobacterium tuberculosis (strain ATCC 25618 / H37Rv).